Here is a 183-residue protein sequence, read N- to C-terminus: NADH-quinone oxidoreductase subunit A (183 aa).

The next 3 membrane-spanning stretches (helical) occupy residues 11–31, 63–83, and 98–118; these read IIAF…VPLL, FYLV…LYAW, and VVIF…VGAL. The segment at 159-183 is disordered; sequence TGQIPAQSSGRVKSKTTPALSSEKE.

Belongs to the complex I subunit 3 family. In terms of assembly, NDH-1 is composed of 14 different subunits. Subunits NuoA, H, J, K, L, M, N constitute the membrane sector of the complex.

The protein localises to the cell inner membrane. The catalysed reaction is a quinone + NADH + 5 H(+)(in) = a quinol + NAD(+) + 4 H(+)(out). In terms of biological role, NDH-1 shuttles electrons from NADH, via FMN and iron-sulfur (Fe-S) centers, to quinones in the respiratory chain. The immediate electron acceptor for the enzyme in this species is believed to be ubiquinone. Couples the redox reaction to proton translocation (for every two electrons transferred, four hydrogen ions are translocated across the cytoplasmic membrane), and thus conserves the redox energy in a proton gradient. This chain is NADH-quinone oxidoreductase subunit A, found in Acinetobacter baumannii (strain ACICU).